A 390-amino-acid chain; its full sequence is Glutamyl-tRNA reductase (390 aa).

Substrate-binding positions include 46–49 (TCNR), Ser-96, 101–103 (EAQ), and Gln-107. Cys-47 acts as the Nucleophile in catalysis. 176-181 (GAGEMA) is an NADP(+) binding site.

The protein belongs to the glutamyl-tRNA reductase family. As to quaternary structure, homodimer.

The catalysed reaction is (S)-4-amino-5-oxopentanoate + tRNA(Glu) + NADP(+) = L-glutamyl-tRNA(Glu) + NADPH + H(+). It functions in the pathway porphyrin-containing compound metabolism; protoporphyrin-IX biosynthesis; 5-aminolevulinate from L-glutamyl-tRNA(Glu): step 1/2. In terms of biological role, catalyzes the NADPH-dependent reduction of glutamyl-tRNA(Glu) to glutamate 1-semialdehyde (GSA). This is Glutamyl-tRNA reductase from Thermus thermophilus (strain ATCC 27634 / DSM 579 / HB8).